A 396-amino-acid chain; its full sequence is NAD(P)H oxidoreductase RTN4IP1, mitochondrial (396 aa).

Residues 1 to 40 (MGFLKTCVFRRNACTAVCFWRSQVVQKPSVRKISTTSPRS) constitute a mitochondrion transit peptide. An Enoyl reductase (ER) domain is found at 52 to 393 (GSNEVLRFTQ…RGHARGKTVI (342 aa)). NADPH contacts are provided by Ser214, Gly216, Val217, Ser237, Tyr255, Asn276, Leu300, Ala341, Phe343, His386, Ala387, and Arg388.

Belongs to the zinc-containing alcohol dehydrogenase family. Quinone oxidoreductase subfamily. As to quaternary structure, interacts with RTN4, UQCRC1 and UQCRC2.

The protein localises to the mitochondrion matrix. It localises to the mitochondrion outer membrane. It catalyses the reaction a 3-demethylubiquinone + NADH + 2 H(+) = a 3-demethylubiquinol + NAD(+). The catalysed reaction is a 3-demethylubiquinone + NADPH + 2 H(+) = a 3-demethylubiquinol + NADP(+). The enzyme catalyses 3-demethylubiquinone-10 + NADH + 2 H(+) = 3-demethylubiquinol-10 + NAD(+). It carries out the reaction 3-demethylubiquinone-10 + NADPH + 2 H(+) = 3-demethylubiquinol-10 + NADP(+). The protein operates within cofactor biosynthesis; ubiquinone biosynthesis. Functionally, NAD(P)H oxidoreductase involved in the ubiquinone biosynthetic pathway. Required for the O-methyltransferase activity of COQ3. Able to catalyze the oxidoreduction of 3-demethylubiquinone into 3-demethylubiquinol in vitro. However, it is unclear if 3-demethylubiquinone constitutes a substrate in vivo. May also play a role in the regulation of retinal ganglion cell (RGC) neurite outgrowth, and hence in the development of the inner retina and optic nerve. Appears to be a potent inhibitor of regeneration following spinal cord injury. This is NAD(P)H oxidoreductase RTN4IP1, mitochondrial (RTN4IP1) from Bos taurus (Bovine).